Reading from the N-terminus, the 95-residue chain is CRISPR-associated endoribonuclease Cas2 1 (95 aa).

Asp-8 lines the Mg(2+) pocket.

This sequence belongs to the CRISPR-associated endoribonuclease Cas2 protein family. In terms of assembly, homodimer, forms a heterotetramer with a Cas1 homodimer. It depends on Mg(2+) as a cofactor.

In terms of biological role, CRISPR (clustered regularly interspaced short palindromic repeat), is an adaptive immune system that provides protection against mobile genetic elements (viruses, transposable elements and conjugative plasmids). CRISPR clusters contain sequences complementary to antecedent mobile elements and target invading nucleic acids. CRISPR clusters are transcribed and processed into CRISPR RNA (crRNA). Functions as a ssRNA-specific endoribonuclease. Involved in the integration of spacer DNA into the CRISPR cassette. The polypeptide is CRISPR-associated endoribonuclease Cas2 1 (Pyrobaculum aerophilum (strain ATCC 51768 / DSM 7523 / JCM 9630 / CIP 104966 / NBRC 100827 / IM2)).